The chain runs to 202 residues: Small ribosomal subunit protein uS4 (202 aa).

A disordered region spans residues 22–43; that stretch reads TRKSARRAYPPGQHGQNRKKRS. The S4 RNA-binding domain maps to 90–152; the sequence is MRLDNTVFRL…APSRKLVENN (63 aa).

The protein belongs to the universal ribosomal protein uS4 family. As to quaternary structure, part of the 30S ribosomal subunit. Contacts protein S5. The interaction surface between S4 and S5 is involved in control of translational fidelity.

In terms of biological role, one of the primary rRNA binding proteins, it binds directly to 16S rRNA where it nucleates assembly of the body of the 30S subunit. With S5 and S12 plays an important role in translational accuracy. The polypeptide is Small ribosomal subunit protein uS4 (Nostoc sp. (strain PCC 7120 / SAG 25.82 / UTEX 2576)).